Here is a 187-residue protein sequence, read N- to C-terminus: Putative manganese efflux pump MntP (187 aa).

A run of 6 helical transmembrane segments spans residues 3-23 (FYSLIFLSCALGMDAFAVSLC), 35-55 (HYLIVGIYFGGFQALMPTIGY), 56-76 (FIGITFASFIASIDHWIAFIL), 107-127 (LALAIATSIDALAVGVSFAFL), 129-149 (VNLLLAIFLIGIITFILCIIA), and 166-186 (LLGGLVLIILGVKILIEHLFF).

Belongs to the MntP (TC 9.B.29) family.

It is found in the cell inner membrane. Probably functions as a manganese efflux pump. This Campylobacter jejuni (strain RM1221) protein is Putative manganese efflux pump MntP.